Reading from the N-terminus, the 316-residue chain is Pantothenate kinase (316 aa).

95–102 serves as a coordination point for ATP; the sequence is GSVAVGKS.

This sequence belongs to the prokaryotic pantothenate kinase family.

The protein localises to the cytoplasm. It carries out the reaction (R)-pantothenate + ATP = (R)-4'-phosphopantothenate + ADP + H(+). Its pathway is cofactor biosynthesis; coenzyme A biosynthesis; CoA from (R)-pantothenate: step 1/5. The chain is Pantothenate kinase from Salmonella choleraesuis (strain SC-B67).